A 101-amino-acid polypeptide reads, in one-letter code: Protein RnfH (101 aa).

This sequence belongs to the UPF0125 (RnfH) family.

The protein is Protein RnfH of Coxiella burnetii (strain CbuG_Q212) (Coxiella burnetii (strain Q212)).